A 397-amino-acid chain; its full sequence is MTLNRTIRCFAAGAAFIVFAAQPALAQAPGGATPPPPQVFVVDIKPHDVPVTYEYAARINAYRNVQVRARVGGILLHRNFVEGTQVKAGEVLFEIDPAPYQAELEKAQAQVAQAEAQYQQSIRDAERAEQLVQQKVQSAAVRDSAFATRDLNKAAVAAAKAQLRTAELNLSYTKVTAPISGITSQEQVNEGSLIGTDASSSLLTSVTQLDPVYVNFSFTDTEAAEIAKLRAERGATGEDADRLKIKILFGDGKAYDHEGTIDFTSSSLDTETGTLGVRAVVENPNHRLIPGQFVRAEILDIQVKDAITVPKAALMQSAQGQFVYVVNKDNVVEVRPVTGARELKNDWLISQGLNSGDRVITEGVIKAVPGRPVQPVVQGVDDKAQAEAGKEQAADKK.

An N-terminal signal peptide occupies residues 1 to 26 (MTLNRTIRCFAAGAAFIVFAAQPALA). Residues 98-139 (APYQAELEKAQAQVAQAEAQYQQSIRDAERAEQLVQQKVQSA) adopt a coiled-coil conformation.

It belongs to the membrane fusion protein (MFP) (TC 8.A.1) family. Probably part of a tripartite efflux pump, which is composed of an outer membrane efflux protein, an inner membrane protein and a protein that expands the periplasmic space. Could form a tripartite pump with BepC and BepE.

Its subcellular location is the periplasm. Involved in resistance to several unrelated toxic compounds, such as dyes, detergents and antibiotics. This is Efflux pump periplasmic linker BepD (bepD) from Brucella suis biovar 1 (strain 1330).